Consider the following 136-residue polypeptide: SNARE-associated protein Snapin (136 aa).

The residue at position 2 (A2) is an N-acetylalanine. S10 is subject to Phosphoserine. T14 bears the Phosphothreonine mark. The stretch at 37–126 (VQQLDSHVHA…TARRRAMLDS (90 aa)) forms a coiled coil. At S50 the chain carries Phosphoserine; by PKA. Positions 83-136 (KKLLNARRRVVLVNNILQNAQERLRRLNHSVAKETARRRAMLDSGIYPPGSPGK) are interaction with TOR1A. A Phosphoserine modification is found at S126. Y129 is subject to Phosphotyrosine. S133 is modified (phosphoserine).

The protein belongs to the SNAPIN family. Component of the biogenesis of lysosome-related organelles complex 1 (BLOC-1) composed of BLOC1S1, BLOC1S2, BLOC1S3, BLOC1S4, BLOC1S5, BLOC1S6, DTNBP1/BLOC1S7 and SNAPIN/BLOC1S8. Octamer composed of one copy each BLOC1S1, BLOC1S2, BLOC1S3, BLOC1S4, BLOC1S5, BLOC1S6, DTNBP1/BLOC1S7 and SNAPIN/BLOC1S8. The BLOC-1 complex associates with the AP-3 protein complex and membrane protein cargos. Component of the BLOC-one-related complex (BORC) which is composed of BLOC1S1, BLOC1S2, BORCS5, BORCS6, BORCS7, BORCS8, KXD1 and SNAPIN. Associates with the SNARE complex. Interacts with CSNK1D, SNAP23 and STX4A but not with STX1A, VAMP2 and SYT1. Interacts with SNAP25; the interaction with SNAP25 is increased by its phosphorylation. Interacts with CNTRL, NANOS1, PUM2 and RGS7. Interacts with TOR1A; the interaction is direct and associates SNAPIN with the CSN complex. In terms of assembly, (Microbial infection) Interacts with human cytomegalovirus/HHV-5 protein UL70. Phosphorylated by CSNK1D/CK1. Phosphorylated by PKD, phosphorylation controls SNAPIN protein stability. In terms of tissue distribution, expressed in male germ cells of adult testis (at protein level).

The protein resides in the membrane. It is found in the cytoplasm. Its subcellular location is the cytosol. The protein localises to the perinuclear region. It localises to the golgi apparatus membrane. The protein resides in the lysosome membrane. It is found in the cytoplasmic vesicle. Its subcellular location is the secretory vesicle. The protein localises to the synaptic vesicle membrane. Its function is as follows. Component of the BLOC-1 complex, a complex that is required for normal biogenesis of lysosome-related organelles (LRO), such as platelet dense granules and melanosomes. In concert with the AP-3 complex, the BLOC-1 complex is required to target membrane protein cargos into vesicles assembled at cell bodies for delivery into neurites and nerve terminals. The BLOC-1 complex, in association with SNARE proteins, is also proposed to be involved in neurite extension. Plays a role in intracellular vesicle trafficking and synaptic vesicle recycling. May modulate a step between vesicle priming, fusion and calcium-dependent neurotransmitter release through its ability to potentiate the interaction of synaptotagmin with the SNAREs and the plasma-membrane-associated protein SNAP25. Its phosphorylation state influences exocytotic protein interactions and may regulate synaptic vesicle exocytosis. May also have a role in the mechanisms of SNARE-mediated membrane fusion in non-neuronal cells. As part of the BORC complex may play a role in lysosomes movement and localization at the cell periphery. Associated with the cytosolic face of lysosomes, the BORC complex may recruit ARL8B and couple lysosomes to microtubule plus-end-directed kinesin motor. The sequence is that of SNARE-associated protein Snapin (SNAPIN) from Homo sapiens (Human).